Reading from the N-terminus, the 432-residue chain is Alcohol acyltransferase 9 (432 aa).

Active-site proton acceptor residues include His-156 and Asp-379.

It belongs to the plant acyltransferase family.

It carries out the reaction 2-(methylsulfanyl)acetyl-CoA + butan-1-ol = butyl 2-(methylsulfanyl)acetate + CoA. It catalyses the reaction ethanol + acetyl-CoA = ethyl acetate + CoA. The enzyme catalyses butan-1-ol + acetyl-CoA = butyl acetate + CoA. The catalysed reaction is butan-1-ol + propanoyl-CoA = butyl propanoate + CoA. Functionally, involved in the biosynthesis of volatile esters which confer kiwifruit flavor. Alcohol acyl transferase that can use a wide range of alcohols as substrate to produce esters. Exhibits acetyl-CoA:alcohol O-acyltransferase activity. This is Alcohol acyltransferase 9 from Actinidia chinensis var. chinensis (Chinese soft-hair kiwi).